A 925-amino-acid polypeptide reads, in one-letter code: Antiviral innate immune response receptor RIG-I (925 aa).

CARD domains are found at residues 1 to 87 and 92 to 172; these read MTTE…GLYE and WDFK…KTLK. Serine 8 carries the post-translational modification (Microbial infection) Phosphoserine. Phosphoserine is present on serine 8. Residues lysine 48, lysine 96, lysine 154, and lysine 164 each participate in a glycyl lysine isopeptide (Lys-Gly) (interchain with G-Cter in ubiquitin) cross-link. Phosphothreonine is present on threonine 170. Glycyl lysine isopeptide (Lys-Gly) (interchain with G-Cter in ubiquitin) cross-links involve residues lysine 172, lysine 181, lysine 193, and lysine 203. An interaction with ZC3HAV1 region spans residues 218 to 925; that stretch reads ECQNLSENSC…IPFDPAEMSK (708 aa). One can recognise a Helicase ATP-binding domain in the interval 251–430; that stretch reads ALPAMKGKNT…DEALDYICKL (180 aa). 264–271 is a binding site for ATP; that stretch reads APTGCGKT. The DECH box signature appears at 372–375; sequence DECH. (Microbial infection) Deamidated asparagine; by herpes simplex virus 1/HHV-1 UL37 occurs at positions 495 and 549. In terms of domain architecture, Helicase C-terminal spans 610–776; sequence KLEDLCFILQ…RLQTWDEAVF (167 aa). The tract at residues 735 to 925 is mediates interaction with RNF135; it reads GSKCFLLTSN…IPFDPAEMSK (191 aa). Residue threonine 770 is modified to Phosphothreonine; by CK2. The 132-residue stretch at 794-925 folds into the RLR CTR domain; it reads QEKPKPVPDK…IPFDPAEMSK (132 aa). Residue cysteine 810 coordinates Zn(2+). A Glycyl lysine isopeptide (Lys-Gly) (interchain with G-Cter in ubiquitin) cross-link involves residue lysine 812. Residue cysteine 813 participates in Zn(2+) binding. A phosphoserine; by CK2 mark is found at serine 854 and serine 855. N6-acetyllysine is present on lysine 858. Zn(2+) is bound by residues cysteine 864 and cysteine 869. Lysine 909 is modified (N6-acetyllysine).

This sequence belongs to the helicase family. RLR subfamily. In terms of assembly, monomer; maintained as a monomer in an autoinhibited state. Upon binding of viral RNAs and conformational shift, homooligomerizes and forms filaments on these molecules. Interacts (via tandem CARD domain) with MAVS/IPS1 promoting its filamentation. Interacts with DHX58/LGP2, IKBKE, TBK1 and STING1. Interacts (via CARD domain) with TRIM25 (via SPRY domain). Interacts (double-stranded RNA-bound oligomeric form) with RNF135 (homodimer); involved in RNA length-dependent activation of the RIG-I signaling pathway. Interacts with CYLD. Interacts with NLRC5; blocks the interaction of MAVS/IPS1 to RIGI. Interacts with SRC. Interacts with DDX60. Interacts with isoform 2 of ZC3HAV1 (via zinc-fingers) in an RNA-dependent manner. Interacts (via tandem CARD domain) with SEC14L1; the interaction is direct and impairs the interaction of RIGI with MAVS/IPS1. Interacts with VCP/p97; interaction is direct and allows the recruitment of RNF125 and subsequent ubiquitination and degradation. Interacts with NOP53; may regulate RIGI through USP15-mediated 'Lys-63'-linked deubiquitination. Interacts with SIGLEC10, CBL and PTPN11; within a negative feedback loop leading to RIGI degradation. Interacts with LRRC25. Interacts with ZCCHC3; leading to activation of RIGI. Interacts with RNF123. Interacts with UBE2D3 and UBE2N; E2 ubiquitin ligases involved in RNF135-mediated ubiquitination of RIGI and activation of the RIG-I signaling pathway. Interacts with IFIT3. Interacts with DDX3X. Interacts with RTN3. Interacts with ARL16; this interaction is GTP-dependent and induced upon viral infection; this interaction suppresses the RNA sensing activity of RIGI. Interacts with DHX16; this interaction enhances RIGI-mediated antiviral response. Interacts with IRGM; promoting RIGI degradation. Interacts with IFI6; this interaction inhibits RIGI activation. Interacts with ECSIT; this interaction bridges RIGI to the MAVS complex at the mitochondrion. Interacts with YWHAE; this interaction drives RIGI at the mitochondrion. As to quaternary structure, (Microbial infection) Interacts with protein Z of Guanarito virus, Machupo virus, Junin arenavirus and Sabia virus. This interaction disrupts its interaction with MAVS/IPS1, impeding downstream IRF3 and NF-kappa-B activation and resulting in decreased IFN-beta induction. (Microbial infection) Interacts (via CARD domain) with Human respiratory syncytial virus A non-structural protein 2 (NS2) and this interaction disrupts its interaction with MAVS/IPS1, impeding downstream IRF3 activation. In terms of assembly, (Microbial infection) Interacts with Rotavirus A non-structural protein 1 (NSP1) and this interaction induces down-regulation of RIGI. As to quaternary structure, (Microbial infection) Interacts with paramyxoviruses (Sendai virus, Nipah virus, Measles virus and Parainfluenza virus 5) protein V; this interaction inhibits TRIM25-mediated ubiquitination of RIG-I and prevents downstream RIG-I signaling thereby inhibiting the IFN responses. (Microbial infection) Interacts with herpes simplex virus 1 protein US11; this interaction prevents the interaction of MAVS/IPS1 to RIGI. In terms of assembly, (Microbial infection) Interacts with herpes simplex virus 1 protein UL37; this interaction deaminates RIGI and inhibits its activation. As to quaternary structure, (Microbial infection) Interacts with Severe fever with thrombocytopenia virus (SFTSV) NSs; this interaction this interaction sequesters RIGI in NSs-induced cytoplasmic inclusion bodies thereby inhibiting the IFN responses. In terms of processing, phosphorylated in resting cells and dephosphorylated in RNA virus-infected cells. Phosphorylation at Thr-770, Ser-854 and Ser-855 results in inhibition of its activity while dephosphorylation at these sites results in its activation. Ubiquitinated. 'Lys-63' ubiquitination by RNF135, which occurs after RNA-binding and homodimerization, releases the autoinhibition of the CARD domains by the RLR CTR domain, an essential step in the activation of the RIG-I signaling pathway. Lys-172 is the critical site of ubiquitination for MAVS/IPS1 binding and to induce anti-viral signal transduction. Lys-154, Lys-164 and Lys-172 are shared sites for RNF135-mediated and TRIM4-mediated ubiquitination. Also undergoes 'Lys-48' ubiquitination at Lys-181 by RNF125 that leads to proteasomal degradation. 'Lys-48' ubiquitination follows viral infection and is enhanced by 'Lys-63'-linked ubiquitination of the CARD domains that promotes interaction with VCP/p97 and subsequent recruitment of RNF125. Within a negative feedback loop involving SIGLEC10 and PTPN11, 'Lys-48' ubiquitination at Lys-812 by CBL also elicits the proteasomal degradation of RIGI. Deubiquitinated by CYLD, a protease that selectively cleaves 'Lys-63'-linked ubiquitin chains. Also probably deubiquitinated by USP17L2/USP17 that cleaves 'Lys-48'- and 'Lys-63'-linked ubiquitin chains and positively regulates the receptor. Ubiquitinated by TRIM40 via 'Lys-48'-linked ubiquitination; leading to proteasomal degradation. Deubiquitinated by USP27X that cleaves 'Lys-63'-linked ubiquitin chains and inhibits the innate immune receptor activity. Deubiquitinated by USP3 that also cleaves 'Lys-63'-linked ubiquitin chains and inhibits the innate immune receptor activity. Undergoes 'Lys-48'-linked ubiquitination catalyzed by MARCHF5 at Lys-193 and Lys-203, leading to proteasomal degradation. Post-translationally, phosphorylated at Ser-8 and Thr-170; these phosphorylations suppresse the TRIM25-mediated 'Lys-63'-linked ubiquitination of RIG-I and thereby prevents RIG-I downstream signaling. Dephosphorylated by phosphatases PPP1CA/PPP1CC; this step is essential to activate RIGI and initiate downstream signaling. In terms of processing, ISGylated. Conjugated to ubiquitin-like protein ISG15 upon IFN-beta stimulation. ISGylation negatively regulates its function in antiviral signaling response. Sumoylated, probably by MUL1; inhibiting its polyubiquitination. Post-translationally, acetylated in response to RNA virus infection. Deacetylated by HDAC6 in the presence of viral mRNAs which is required for detection of viral RNA by RIGI. In terms of processing, (Microbial infection) Deamidated on Asn-495 and Asn-549 by herpes simplex virus 1 protein UL37. These modifications eliminate RIGI detection of viral RNA and restriction of viral replication. Degraded via selective autophagy following interaction with IRGM. IRGM promotes RIGI recruitment to autophagosome membranes, promoting its SQSTM1/p62-dependent autophagic degradation. Post-translationally, (Microbial infection) Cleaved by the protease 3C of coxsackievirus B3, poliovirus and enterovirus 71 allowing the virus to disrupt the host type I interferon production. In terms of processing, (Microbial infection) Phosphorylated at Ser-8 by herpes simplex virus 1 protein US3 leading to inhibition of critical RIGI activation steps. Present in vascular smooth cells (at protein level).

It is found in the cytoplasm. Its subcellular location is the cell projection. It localises to the ruffle membrane. The protein localises to the cytoskeleton. The protein resides in the cell junction. It is found in the tight junction. It carries out the reaction ATP + H2O = ADP + phosphate + H(+). Functionally, innate immune receptor that senses cytoplasmic viral nucleic acids and activates a downstream signaling cascade leading to the production of type I interferons and pro-inflammatory cytokines. Forms a ribonucleoprotein complex with viral RNAs on which it homooligomerizes to form filaments. The homooligomerization allows the recruitment of RNF135 an E3 ubiquitin-protein ligase that activates and amplifies the RIG-I-mediated antiviral signaling in an RNA length-dependent manner through ubiquitination-dependent and -independent mechanisms. Upon activation, associates with mitochondria antiviral signaling protein (MAVS/IPS1) that activates the IKK-related kinases TBK1 and IKBKE which in turn phosphorylate the interferon regulatory factors IRF3 and IRF7, activating transcription of antiviral immunological genes including the IFN-alpha and IFN-beta interferons. Ligands include 5'-triphosphorylated ssRNAs and dsRNAs but also short dsRNAs (&lt;1 kb in length). In addition to the 5'-triphosphate moiety, blunt-end base pairing at the 5'-end of the RNA is very essential. Overhangs at the non-triphosphorylated end of the dsRNA RNA have no major impact on its activity. A 3'overhang at the 5'triphosphate end decreases and any 5'overhang at the 5' triphosphate end abolishes its activity. Detects both positive and negative strand RNA viruses including members of the families Paramyxoviridae: Human respiratory syncytial virus and measles virus (MeV), Rhabdoviridae: vesicular stomatitis virus (VSV), Orthomyxoviridae: influenza A and B virus, Flaviviridae: Japanese encephalitis virus (JEV), hepatitis C virus (HCV), dengue virus (DENV) and west Nile virus (WNV). It also detects rotaviruses and reoviruses. Detects and binds to SARS-CoV-2 RNAs which is inhibited by m6A RNA modifications. Also involved in antiviral signaling in response to viruses containing a dsDNA genome such as Epstein-Barr virus (EBV). Detects dsRNA produced from non-self dsDNA by RNA polymerase III, such as Epstein-Barr virus-encoded RNAs (EBERs). May play important roles in granulocyte production and differentiation, bacterial phagocytosis and in the regulation of cell migration. This Homo sapiens (Human) protein is Antiviral innate immune response receptor RIG-I.